A 775-amino-acid chain; its full sequence is Acetamidase regulatory protein (775 aa).

Residues 1-15 show a composition bias toward polar residues; it reads MSSTAHNSQPSTGNG. Positions 1–20 are disordered; the sequence is MSSTAHNSQPSTGNGVTKRK. A DNA-binding region (zn(2)-C6 fungal-type) is located at residues 26 to 59; the sequence is CIHCHRRKVRCDARIVGLPCSNCRSAGKADCRIH. Residues 126-153 show a composition bias toward polar residues; it reads PHSSYTNGNHLSNNRGSQPITETQTFTR. Disordered regions lie at residues 126 to 159 and 630 to 699; these read PHSS…GADR and ATSE…HQNQ. Positions 630-644 are enriched in basic and acidic residues; sequence ATSERPRRFSTHDQN. Over residues 674–689 the composition is skewed to pro residues; sequence PRPPYEVPTPESPRMP.

It localises to the nucleus. Its function is as follows. Positively regulates the expression of genes involved in the catabolism of certain amides, omega amino acids, and lactams. The sequence is that of Acetamidase regulatory protein (amdR) from Aspergillus oryzae (strain ATCC 42149 / RIB 40) (Yellow koji mold).